We begin with the raw amino-acid sequence, 289 residues long: Acetyl-coenzyme A carboxylase carboxyl transferase subunit beta (289 aa).

The region spanning 28 to 289 is the CoA carboxyltransferase N-terminal domain; the sequence is VMTKCPKCKK…QGGEMAVWQS (262 aa). Residues Cys32, Cys35, Cys51, and Cys54 each coordinate Zn(2+). A C4-type zinc finger spans residues 32-54; it reads CPKCKKIMYTKEVLKNLKVCVNC.

Belongs to the AccD/PCCB family. In terms of assembly, acetyl-CoA carboxylase is a heterohexamer composed of biotin carboxyl carrier protein (AccB), biotin carboxylase (AccC) and two subunits each of ACCase subunit alpha (AccA) and ACCase subunit beta (AccD). Zn(2+) is required as a cofactor.

It localises to the cytoplasm. The catalysed reaction is N(6)-carboxybiotinyl-L-lysyl-[protein] + acetyl-CoA = N(6)-biotinyl-L-lysyl-[protein] + malonyl-CoA. Its pathway is lipid metabolism; malonyl-CoA biosynthesis; malonyl-CoA from acetyl-CoA: step 1/1. Its function is as follows. Component of the acetyl coenzyme A carboxylase (ACC) complex. Biotin carboxylase (BC) catalyzes the carboxylation of biotin on its carrier protein (BCCP) and then the CO(2) group is transferred by the transcarboxylase to acetyl-CoA to form malonyl-CoA. In Bacillus cereus (strain ZK / E33L), this protein is Acetyl-coenzyme A carboxylase carboxyl transferase subunit beta.